Reading from the N-terminus, the 322-residue chain is Malate dehydrogenase (322 aa).

Residues 10-15 (GSGQIG) and aspartate 34 each bind NAD(+). Arginine 83 and arginine 89 together coordinate substrate. NAD(+)-binding positions include asparagine 96 and 119–121 (ITN). The substrate site is built by asparagine 121 and arginine 152. Residue histidine 176 is the Proton acceptor of the active site.

This sequence belongs to the LDH/MDH superfamily. MDH type 3 family.

The catalysed reaction is (S)-malate + NAD(+) = oxaloacetate + NADH + H(+). Its function is as follows. Catalyzes the reversible oxidation of malate to oxaloacetate. The sequence is that of Malate dehydrogenase from Bradyrhizobium sp. (strain BTAi1 / ATCC BAA-1182).